Reading from the N-terminus, the 394-residue chain is LL-diaminopimelate aminotransferase (394 aa).

Residues Tyr-14 and Gly-41 each coordinate substrate. Pyridoxal 5'-phosphate contacts are provided by residues Tyr-71, 104–105 (AK), Tyr-128, Asn-174, Tyr-205, and 233–235 (SFS). Residues Lys-105, Tyr-128, and Asn-174 each coordinate substrate. At Lys-236 the chain carries N6-(pyridoxal phosphate)lysine. Arg-244 and Asn-275 together coordinate pyridoxal 5'-phosphate. 2 residues coordinate substrate: Asn-275 and Arg-369.

The protein belongs to the class-I pyridoxal-phosphate-dependent aminotransferase family. LL-diaminopimelate aminotransferase subfamily. In terms of assembly, homodimer. The cofactor is pyridoxal 5'-phosphate.

The catalysed reaction is (2S,6S)-2,6-diaminopimelate + 2-oxoglutarate = (S)-2,3,4,5-tetrahydrodipicolinate + L-glutamate + H2O + H(+). Its pathway is amino-acid biosynthesis; L-lysine biosynthesis via DAP pathway; LL-2,6-diaminopimelate from (S)-tetrahydrodipicolinate (aminotransferase route): step 1/1. In terms of biological role, involved in the synthesis of meso-diaminopimelate (m-DAP or DL-DAP), required for both lysine and peptidoglycan biosynthesis. Catalyzes the direct conversion of tetrahydrodipicolinate to LL-diaminopimelate. Is also able to use meso-diaminopimelate, cystathionine, lysine or ornithine as substrates. The protein is LL-diaminopimelate aminotransferase of Chlamydia trachomatis serovar D (strain ATCC VR-885 / DSM 19411 / UW-3/Cx).